Reading from the N-terminus, the 102-residue chain is MANLVSVRRRPYRYPHSAIISSIFLIIIFTPDNLNNGATAFCSQLSPPYLDLQPIFSVLSASRQHHIPAFLLALACPIMGLIPMIKDSSTIPISRLPLLPSF.

It belongs to the UPF0328 family.

The sequence is that of UPF0328 protein ECU10_1820 from Encephalitozoon cuniculi (strain GB-M1) (Microsporidian parasite).